A 693-amino-acid chain; its full sequence is Cyclin-dependent kinase G-1 (693 aa).

The segment covering 1 to 10 (MAAGSHGGYR) has biased composition (gly residues). Disordered stretches follow at residues 1-148 (MAAG…ARDP) and 236-308 (KKKK…DDYP). Positions 13–24 (EVAREREHDVGV) are enriched in basic and acidic residues. Residues 26–39 (RRSKEHYHHRHPSR) are compositionally biased toward basic residues. Basic and acidic residues-rich tracts occupy residues 40–54 (HRDS…RSGG), 75–87 (RPSE…REPG), and 97–122 (RSGE…EEAK). Positions 268–284 (SVRSSSRSSDSGVLQGS) are enriched in low complexity. A compositionally biased stretch (basic and acidic residues) spans 287-304 (RDLEVEKGDNIDVEKAAD). Residues 349–640 (FERLNTINEG…AEDALNHEWF (292 aa)) form the Protein kinase domain. ATP is bound by residues 355-363 (INEGTYGVV) and Lys-378. The residue at position 359 (Thr-359) is a Phosphothreonine. At Tyr-360 the chain carries Phosphotyrosine. Asp-473 functions as the Proton acceptor in the catalytic mechanism. Position 500 is a phosphoserine (Ser-500). Thr-506 is subject to Phosphothreonine. The interval 664–693 (RFKKHMKSPDPLEEQWMKEQGNNGDRGLFG) is disordered.

This sequence belongs to the protein kinase superfamily. CMGC Ser/Thr protein kinase family. CDC2/CDKX subfamily.

The enzyme catalyses L-seryl-[protein] + ATP = O-phospho-L-seryl-[protein] + ADP + H(+). It catalyses the reaction L-threonyl-[protein] + ATP = O-phospho-L-threonyl-[protein] + ADP + H(+). It carries out the reaction [DNA-directed RNA polymerase] + ATP = phospho-[DNA-directed RNA polymerase] + ADP + H(+). The polypeptide is Cyclin-dependent kinase G-1 (CDKG-1) (Oryza sativa subsp. indica (Rice)).